A 458-amino-acid chain; its full sequence is MKTELSEVWQQCIDHLERHTSKTAIENWVRSTRPVAVVEDTIIVGVQGEFAKHRMESRYAPLLRQALRDLTKRNMQLKFVANPNVIEDPAAEPVDAPNVADLPAGTSAPAAEQNARLLGYINPKYTFETFVVGNSNRFAHAAALAVAETPARTYNPLFIYGGVGLGKTHLMHAIGHYVLQHNPTAKVAYVSTETFTNEFIMAIQKGSTTAFQNRYRKVDVLLIDDIQFLAGKEATQEEFYHTFNAIREANKQIVISSDRPPKEIPTLEDRLRSRFEWGLICDIQPPDLETRTAILRKKAQSEGIQVPDEVTNYIATNIETNIRELEGALTRVVAYANMLKCPLTYDLAVQALKDILPPVRPKQITIATIKQVVAEHYNIRMQDFEVRNRSRAVAYPRQIAMYLARELTDSSLPKIGEEFGGRDHTTVIHACEKIAKDIQSDPAFAHTIEQLIARIRAE.

Residues 1 to 93 (MKTELSEVWQ…NVIEDPAAEP (93 aa)) form a domain I, interacts with DnaA modulators region. The interval 94–119 (VDAPNVADLPAGTSAPAAEQNARLLG) is domain II. Residues 120–336 (YINPKYTFET…GALTRVVAYA (217 aa)) are domain III, AAA+ region. G164, G166, K167, and T168 together coordinate ATP. Residues 337-458 (NMLKCPLTYD…EQLIARIRAE (122 aa)) form a domain IV, binds dsDNA region.

The protein belongs to the DnaA family. As to quaternary structure, oligomerizes as a right-handed, spiral filament on DNA at oriC.

It localises to the cytoplasm. Its function is as follows. Plays an essential role in the initiation and regulation of chromosomal replication. ATP-DnaA binds to the origin of replication (oriC) to initiate formation of the DNA replication initiation complex once per cell cycle. Binds the DnaA box (a 9 base pair repeat at the origin) and separates the double-stranded (ds)DNA. Forms a right-handed helical filament on oriC DNA; dsDNA binds to the exterior of the filament while single-stranded (ss)DNA is stabiized in the filament's interior. The ATP-DnaA-oriC complex binds and stabilizes one strand of the AT-rich DNA unwinding element (DUE), permitting loading of DNA polymerase. After initiation quickly degrades to an ADP-DnaA complex that is not apt for DNA replication. Binds acidic phospholipids. This chain is Chromosomal replication initiator protein DnaA, found in Symbiobacterium thermophilum (strain DSM 24528 / JCM 14929 / IAM 14863 / T).